A 251-amino-acid chain; its full sequence is Ubiquinone/menaquinone biosynthesis C-methyltransferase UbiE (251 aa).

S-adenosyl-L-methionine is bound by residues Thr-74, Asp-95, 123-124 (NA), and Ser-140.

It belongs to the class I-like SAM-binding methyltransferase superfamily. MenG/UbiE family.

The catalysed reaction is a 2-demethylmenaquinol + S-adenosyl-L-methionine = a menaquinol + S-adenosyl-L-homocysteine + H(+). It carries out the reaction a 2-methoxy-6-(all-trans-polyprenyl)benzene-1,4-diol + S-adenosyl-L-methionine = a 5-methoxy-2-methyl-3-(all-trans-polyprenyl)benzene-1,4-diol + S-adenosyl-L-homocysteine + H(+). The protein operates within quinol/quinone metabolism; menaquinone biosynthesis; menaquinol from 1,4-dihydroxy-2-naphthoate: step 2/2. It functions in the pathway cofactor biosynthesis; ubiquinone biosynthesis. Its function is as follows. Methyltransferase required for the conversion of demethylmenaquinol (DMKH2) to menaquinol (MKH2) and the conversion of 2-polyprenyl-6-methoxy-1,4-benzoquinol (DDMQH2) to 2-polyprenyl-3-methyl-6-methoxy-1,4-benzoquinol (DMQH2). The chain is Ubiquinone/menaquinone biosynthesis C-methyltransferase UbiE from Enterobacter sp. (strain 638).